The primary structure comprises 473 residues: LEC14B protein (473 aa).

WD repeat units lie at residues 212–242, 254–285, 301–331, 377–413, and 425–455; these read GYSF…CVYD, AHES…KVWD, GHLE…KLWD, GHSV…YIYD, and YHKA…VKWE.

The protein belongs to the WD repeat LEC14B family.

This Lithospermum erythrorhizon (Purple gromwell) protein is LEC14B protein.